The sequence spans 438 residues: Na(+)/H(+) antiporter NhaA (438 aa).

Transmembrane regions (helical) follow at residues 23 to 43, 62 to 82, 104 to 124, 133 to 153, 162 to 182, 185 to 205, 221 to 241, 302 to 322, 337 to 357, 372 to 392, and 410 to 430; these read FGGI…NSFL, FFIG…LFFL, SFPV…YFFL, GFGI…MLLG, VFLI…IALF, TNLK…LAVL, VLLW…AVIL, FLAP…NAGV, LGVI…ITFI, WWHI…SMFI, and IAIL…LFAL.

It belongs to the NhaA Na(+)/H(+) (TC 2.A.33) antiporter family.

The protein resides in the cell inner membrane. The catalysed reaction is Na(+)(in) + 2 H(+)(out) = Na(+)(out) + 2 H(+)(in). Its function is as follows. Na(+)/H(+) antiporter that extrudes sodium in exchange for external protons. This Helicobacter pylori (strain HPAG1) protein is Na(+)/H(+) antiporter NhaA.